The sequence spans 360 residues: UPF0496 protein At3g19250 (360 aa).

A disordered region spans residues 1 to 29; sequence MPHCFTFKPASPEGSLGDDHLPHPSPEGS. A run of 2 helical transmembrane segments spans residues 205–225 and 229–249; these read HHAT…VAAS and IAYH…TPYL.

It belongs to the UPF0496 family.

It is found in the membrane. The protein is UPF0496 protein At3g19250 of Arabidopsis thaliana (Mouse-ear cress).